The chain runs to 398 residues: Phytoene synthase 2, chloroplastic (398 aa).

The transit peptide at 1–80 directs the protein to the chloroplast; it reads MASSSSAAAL…EEAVYEVVLR (80 aa).

The protein belongs to the phytoene/squalene synthase family. Expressed in leaves and endosperm. Expressed in developing leaves.

It is found in the plastid. The protein resides in the chloroplast membrane. Its subcellular location is the chloroplast. The protein localises to the plastoglobule. It catalyses the reaction 2 (2E,6E,10E)-geranylgeranyl diphosphate = 15-cis-phytoene + 2 diphosphate. Catalyzes the conversion of geranylgeranyl diphosphate to phytoene. Mediates the first committed step in carotenoid biosynthesis. This is Phytoene synthase 2, chloroplastic from Oryza sativa subsp. japonica (Rice).